Consider the following 379-residue polypeptide: Cytochrome b (379 aa).

4 helical membrane passes run 34–54, 78–99, 114–134, and 179–199; these read FGSLLGICLITQILTGLLLAT, WLIRNLHANGASFFFICIYLHI, WNIGIILLLTLMATAFVGYVL, and FFALHFLLPFLIVSLSIIHLT. Positions 84 and 98 each coordinate heme b. Residues H183 and H197 each coordinate heme b. A ubiquinone is bound at residue H202. A run of 4 helical transmembrane segments spans residues 227-247, 289-309, 321-341, and 348-368; these read TKDMLGFTLMFFPLLTLAFFF, LGGVLALTASVLILFLSPLLH, MSQLLFWLLIANLLILTWIGS, and FIIIGQVASFTYFFTLLFLFP.

It belongs to the cytochrome b family. In terms of assembly, the cytochrome bc1 complex contains 11 subunits: 3 respiratory subunits (MT-CYB, CYC1 and UQCRFS1), 2 core proteins (UQCRC1 and UQCRC2) and 6 low-molecular weight proteins (UQCRH/QCR6, UQCRB/QCR7, UQCRQ/QCR8, UQCR10/QCR9, UQCR11/QCR10 and a cleavage product of UQCRFS1). This cytochrome bc1 complex then forms a dimer. Heme b serves as cofactor.

It is found in the mitochondrion inner membrane. In terms of biological role, component of the ubiquinol-cytochrome c reductase complex (complex III or cytochrome b-c1 complex) that is part of the mitochondrial respiratory chain. The b-c1 complex mediates electron transfer from ubiquinol to cytochrome c. Contributes to the generation of a proton gradient across the mitochondrial membrane that is then used for ATP synthesis. In Tinamus major (Great tinamou), this protein is Cytochrome b (MT-CYB).